The chain runs to 178 residues: Large ribosomal subunit protein uL6 (178 aa).

It belongs to the universal ribosomal protein uL6 family. Part of the 50S ribosomal subunit.

This protein binds to the 23S rRNA, and is important in its secondary structure. It is located near the subunit interface in the base of the L7/L12 stalk, and near the tRNA binding site of the peptidyltransferase center. The sequence is that of Large ribosomal subunit protein uL6 from Listeria monocytogenes serotype 4a (strain HCC23).